The sequence spans 300 residues: MADAWKDLASGTVGGAAQLVVGHPFDTIKVKLQSQPTPAPGQLPRYTGAIDAVKQTVASEGTKGLYKGMGAPLATVAAFNAVLFTVRGQMEGLLRSEAGVPLTISQQFVAGAGAGFAVSFLACPTELIKCRLQAQGALAGASTTSSVVAAVKYGGPMDVARHVLRSEGGARGLFKGLFPTFAREVPGNATMFAAYEAFKRFLAGGSDTSSLGQGSLIMAGGVAGASFWGIVYPTDVVKSVLQVDDYKNPRYTGSMDAFRKILKSEGVKGLYKGFGPAMARSVPANAACFLAYEMTRSSLG.

Solcar repeat units lie at residues 2–93, 102–201, and 211–298; these read ADAW…MEGL, LTIS…FKRF, and LGQG…TRSS. 6 helical membrane-spanning segments follow: residues 8–28, 64–84, 108–128, 176–195, 211–231, and 273–292; these read LASG…FDTI, GLYK…AVLF, FVAG…TELI, GLFP…FAAY, LGQG…WGIV, and GFGP…FLAY.

The protein belongs to the mitochondrial carrier (TC 2.A.29) family. As to expression, high expression in cotyledons, leaves, flowers and developing siliques. Lower expression in roots and maturing siliques. Not detected in meristematic tissues.

Its subcellular location is the mitochondrion inner membrane. Its function is as follows. Involved in photorespiratory metabolism. Acts probably as a carrier for a glycine decarboxylase (GDC) cofactor or, alternatively, may act as a mitochondrial glycine shuttle. Involved in the transition from the embryonic stage to the juvenile autotrophic stage. The polypeptide is Mitochondrial carnitine/acylcarnitine carrier-like protein (BOU) (Arabidopsis thaliana (Mouse-ear cress)).